We begin with the raw amino-acid sequence, 335 residues long: uncharacterized protein (335 aa).

Helical transmembrane passes span 104–124, 128–148, 280–300, and 310–330; these read FKKV…MGLL, LLQG…LSLF, LAFG…TMIG, and TINL…GIFV.

The protein localises to the cell membrane. This is an uncharacterized protein from Methanocaldococcus jannaschii (strain ATCC 43067 / DSM 2661 / JAL-1 / JCM 10045 / NBRC 100440) (Methanococcus jannaschii).